A 761-amino-acid polypeptide reads, in one-letter code: MTTAVTGEHHASVQRIQLRISGMSCSACAHRVESTLNKLPGVRAAVNFGTRVATIDTSEAVDAAALCQAVRRAGYQADLCTDDGRSASDPDADHARQLLIRLAIAAVLFVPVADLSVMFGVVPATRFTGWQWVLSALALPVVTWAAWPFHRVAMRNARHHAASMETLISVGITAATIWSLYTVFGNHSPIERSGIWQALLGSDAIYFEVAAGVTVFVLVGRYFEARAKSQAGSALRALAALSAKEVAVLLPDGSEMVIPADELKEQQRFVVRPGQIVAADGLAVDGSAAVDMSAMTGEAKPTRVRPGGQVIGGTTVLDGRLIVEAAAVGADTQFAGMVRLVEQAQAQKADAQRLADRISSVFVPAVLVIAALTAAGWLIAGGQPDRAVSAALAVLVIACPCALGLATPTAMMVASGRGAQLGIFLKGYKSLEATRAVDTVVFDKTGTLTTGRLQVSAVTAAPGWEADQVLALAATVEAASEHSVALAIAAATTRRDAVTDFRAIPGRGVSGTVSGRAVRVGKPSWIGSSSCHPNMRAARRHAESLGETAVFVEVDGEPCGVIAVADAVKDSARDAVAALADRGLRTMLLTGDNPESAAAVATRVGIDEVIADILPEGKVDVIEQLRDRGHVVAMVGDGINDGPALARADLGMAIGRGTDVAIGAADIILVRDHLDVVPLALDLARATMRTVKLNMVWAFGYNIAAIPVAAAGLLNPLVAGAAMAFSSFFVVSNSLRLRKFGRYPLGCGTVGGPQMTAPSSA.

Threonine 2 bears the N-acetylthreonine mark. One can recognise an HMA domain in the interval 14–78 (QRIQLRISGM…AVRRAGYQAD (65 aa)). Cu(+)-binding residues include cysteine 25 and cysteine 28. 6 consecutive transmembrane segments (helical) span residues 102–122 (LAIAAVLFVPVADLSVMFGVV), 129–149 (GWQWVLSALALPVVTWAAWPF), 164–184 (METLISVGITAATIWSLYTVF), 199–219 (LLGSDAIYFEVAAGVTVFVLV), 361–381 (VFVPAVLVIAALTAAGWLIAG), and 387–407 (AVSAALAVLVIACPCALGLAT). The active-site 4-aspartylphosphate intermediate is the aspartate 443. The next 2 membrane-spanning stretches (helical) occupy residues 695 to 714 (MVWAFGYNIAAIPVAAAGLL) and 718 to 735 (VAGAAMAFSSFFVVSNSL).

This sequence belongs to the cation transport ATPase (P-type) (TC 3.A.3) family. Type IB subfamily.

Its subcellular location is the cell membrane. It carries out the reaction Cu(+)(in) + ATP + H2O = Cu(+)(out) + ADP + phosphate + H(+). Its activity is regulated as follows. ATPase activity is stimulated by Cu(+) ions. Functionally, involved in copper export. Could be involved in the copper detoxification of mycobacterial cells. The chain is Copper-exporting P-type ATPase (ctpA) from Mycobacterium tuberculosis (strain ATCC 25618 / H37Rv).